The primary structure comprises 164 residues: UPF0304 protein YfbU (164 aa).

It belongs to the UPF0304 family.

The sequence is that of UPF0304 protein YfbU from Salmonella enteritidis PT4 (strain P125109).